The sequence spans 128 residues: Virion-associated protein (128 aa).

Coiled coils occupy residues 1-30 (MNLA…ILAK) and 37-58 (ESSN…EMKE). The segment at 98 to 128 (FDVGNEGMGSSTNPNALKWPPTEKPQPWPPR) is disordered. Pro residues predominate over residues 119-128 (TEKPQPWPPR). A capsid binding region spans residues 122–128 (PQPWPPR).

This sequence belongs to the caulimovirus ORF III family. Homotetramer, through coiled-coil domain. Homotrimer when interacts with icosehadral capsid. Interacts with capsid protein, and with Movement protein.

The protein resides in the virion. It is found in the host cell junction. It localises to the host plasmodesma. Functionally, plays a role in virus cell-to-cell and plant-to-plant transmission. Interacts with virion icosahedral capsid and movement protein, thereby facilitating virion cell-to-cell transmission through plasmodesmata opened by viral movement protein. Also interacts with aphid transmission factor, attaching the virion to aphid stylet when the animal feeds on an virus infected plant. Aphid saliva may later detach the virion, inducing release of infectious particles when the animal feeds on a new plant. This Carnation etched ring virus (CERV) protein is Virion-associated protein.